The chain runs to 968 residues: RNA polymerase-associated protein RapA (968 aa).

Residues 164–334 (DVGRRHAPRV…FARLRLLDPN (171 aa)) form the Helicase ATP-binding domain. ATP is bound at residue 177-184 (DEVGLGKT). The DEAH box signature appears at 280-283 (DEAH). The 196-residue stretch at 490–685 (RVEWLMGYLT…ALKAQLEQGR (196 aa)) folds into the Helicase C-terminal domain.

The protein belongs to the SNF2/RAD54 helicase family. RapA subfamily. As to quaternary structure, interacts with the RNAP. Has a higher affinity for the core RNAP than for the holoenzyme. Its ATPase activity is stimulated by binding to RNAP.

In terms of biological role, transcription regulator that activates transcription by stimulating RNA polymerase (RNAP) recycling in case of stress conditions such as supercoiled DNA or high salt concentrations. Probably acts by releasing the RNAP, when it is trapped or immobilized on tightly supercoiled DNA. Does not activate transcription on linear DNA. Probably not involved in DNA repair. The chain is RNA polymerase-associated protein RapA from Salmonella choleraesuis (strain SC-B67).